A 133-amino-acid polypeptide reads, in one-letter code: ATP synthase epsilon chain, chloroplastic (133 aa).

The protein belongs to the ATPase epsilon chain family. F-type ATPases have 2 components, CF(1) - the catalytic core - and CF(0) - the membrane proton channel. CF(1) has five subunits: alpha(3), beta(3), gamma(1), delta(1), epsilon(1). CF(0) has three main subunits: a, b and c.

It is found in the plastid. The protein resides in the chloroplast thylakoid membrane. Functionally, produces ATP from ADP in the presence of a proton gradient across the membrane. The sequence is that of ATP synthase epsilon chain, chloroplastic from Lactuca sativa (Garden lettuce).